Reading from the N-terminus, the 125-residue chain is Holo-[acyl-carrier-protein] synthase (125 aa).

2 residues coordinate Mg(2+): aspartate 8 and glutamate 55.

It belongs to the P-Pant transferase superfamily. AcpS family. Mg(2+) serves as cofactor.

It is found in the cytoplasm. The enzyme catalyses apo-[ACP] + CoA = holo-[ACP] + adenosine 3',5'-bisphosphate + H(+). Transfers the 4'-phosphopantetheine moiety from coenzyme A to a Ser of acyl-carrier-protein. The sequence is that of Holo-[acyl-carrier-protein] synthase from Treponema pallidum (strain Nichols).